The primary structure comprises 317 residues: Secreted mono- and diacylglycerol lipase 3 (317 aa).

The signal sequence occupies residues 1–29 (MMFADDLVRMAVLRFITVALAAITNVANA). Cys-61 and Cys-310 are oxidised to a cystine. The N-linked (GlcNAc...) asparagine glycan is linked to Asn-108. Residue Ser-175 is the Nucleophile of the active site. Residue Asn-194 is glycosylated (N-linked (GlcNAc...) asparagine). The active site involves Asp-234. Asn-258 carries an N-linked (GlcNAc...) asparagine glycan. Residue His-294 is part of the active site.

This sequence belongs to the AB hydrolase superfamily. Lipase family. Class 3 subfamily.

The protein resides in the secreted. The enzyme catalyses a monoacylglycerol + H2O = glycerol + a fatty acid + H(+). It carries out the reaction a diacylglycerol + H2O = a monoacylglycerol + a fatty acid + H(+). In terms of biological role, secreted mono- and diacylglycerol lipase involved in plant virulence. Has a substrate preference for p-nitrophenyl esters with a carbon chain length of C10 (p-nitrophenyl caprate). The chain is Secreted mono- and diacylglycerol lipase 3 from Gibberella zeae (strain ATCC MYA-4620 / CBS 123657 / FGSC 9075 / NRRL 31084 / PH-1) (Wheat head blight fungus).